Consider the following 1258-residue polypeptide: Phospholipid-transporting ATPase C887.12 (1258 aa).

Disordered stretches follow at residues 1-41 (MARD…LGED) and 53-83 (YISSSGQNSTNPFLADTRIENSPLGSESKAN). Residues 1-183 (MARDVDNKQN…PKFLKEQFSK (183 aa)) lie on the Cytoplasmic side of the membrane. The segment covering 53–64 (YISSSGQNSTNP) has biased composition (polar residues). The helical transmembrane segment at 184 to 204 (YANLFFLFTAVVQQIPGITPV) threads the bilayer. Topologically, residues 205-208 (NRYT) are lumenal. The helical transmembrane segment at 209–229 (TIGPMLIVLSVSGIKEIMEDI) threads the bilayer. Residues 230-406 (KRKKQDQELN…TSVEKQVNSQ (177 aa)) are Cytoplasmic-facing. A helical membrane pass occupies residues 407-427 (ILFLLCIFVFLCFASSLGALI). At 428-451 (HRSVYGSALSYVKYTSNRAGMFFK) the chain is on the lumenal side. Residues 452–472 (GLLTFWILYSNLVPISLFVTF) form a helical membrane-spanning segment. The Cytoplasmic segment spans residues 473–974 (ELVRYIQAQL…KLILYSFYKN (502 aa)). The 4-aspartylphosphate intermediate role is filled by D518. 15 residues coordinate ATP: D518, K519, T520, E613, F654, S656, K659, K677, R710, T711, T790, G791, D792, R883, and K889. D518 contributes to the Mg(2+) binding site. Residue T520 participates in Mg(2+) binding. D909 lines the Mg(2+) pocket. 2 residues coordinate ATP: N912 and D913. Position 913 (D913) interacts with Mg(2+). A helical transmembrane segment spans residues 975–995 (IALYMTQFWYAFCNAFSGQVI). Over 996–998 (FES) the chain is Lumenal. A helical transmembrane segment spans residues 999-1019 (WSISLYNVLFTVLPPVVIGIF). Topologically, residues 1020-1051 (DQFVSAGQLFQYPQLYQLGQRSEFFNLKRFWS) are cytoplasmic. The chain crosses the membrane as a helical span at residues 1052–1072 (WITNGFYHSLLLFLCSIAVFY). At 1073-1086 (YDGPNKDGLASGHW) the chain is on the lumenal side. Residues 1087–1107 (VWGTTLYAAILATVLGKAALI) traverse the membrane as a helical segment. A 1,2-diacyl-sn-glycero-3-phospho-(1D-myo-inositol 4-phosphate) is bound at residue K1103. At 1108–1115 (SNHWTQYT) the chain is on the cytoplasmic side. The chain crosses the membrane as a helical span at residues 1116 to 1136 (VIATLGSFLLWIVFMPIYAVA). At 1137 to 1148 (APAIGFSKEYYG) the chain is on the lumenal side. The chain crosses the membrane as a helical span at residues 1149–1169 (IIPHLYGNLKFWASLLVLPTI). Topologically, residues 1170–1258 (ALMRDFVWKY…HTRGAYGEMR (89 aa)) are cytoplasmic. A 1,2-diacyl-sn-glycero-3-phospho-(1D-myo-inositol 4-phosphate) contacts are provided by R1173, W1177, K1178, Y1189, and H1190.

It belongs to the cation transport ATPase (P-type) (TC 3.A.3) family. Type IV subfamily. Requires Mg(2+) as cofactor.

It is found in the endoplasmic reticulum membrane. It localises to the golgi apparatus. The protein resides in the trans-Golgi network membrane. It carries out the reaction ATP + H2O + phospholipidSide 1 = ADP + phosphate + phospholipidSide 2.. The catalysed reaction is a 1,2-diacyl-sn-glycero-3-phospho-L-serine(out) + ATP + H2O = a 1,2-diacyl-sn-glycero-3-phospho-L-serine(in) + ADP + phosphate + H(+). It catalyses the reaction a 1,2-diacyl-sn-glycero-3-phosphoethanolamine(out) + ATP + H2O = a 1,2-diacyl-sn-glycero-3-phosphoethanolamine(in) + ADP + phosphate + H(+). Its function is as follows. Catalytic component of a P4-ATPase flippase complex which catalyzes the hydrolysis of ATP coupled to the transport of phosphatidylserine and small amounts of ethanolamine from the lumen to the cytosolic leaflet of the trans-Golgi network and ensures the maintenance of asymmetric distribution of phospholipids. In Schizosaccharomyces pombe (strain 972 / ATCC 24843) (Fission yeast), this protein is Phospholipid-transporting ATPase C887.12.